Reading from the N-terminus, the 508-residue chain is Cytochrome P450 monooxygenase aflV (508 aa).

The helical transmembrane segment at 18–38 (LTWWFLAVGGAWIVSKIIKIL) threads the bilayer. 4 N-linked (GlcNAc...) asparagine glycosylation sites follow: Asn192, Asn209, Asn302, and Asn408. Residue Cys453 participates in heme binding.

The protein belongs to the cytochrome P450 family. Requires heme as cofactor.

It localises to the membrane. It functions in the pathway mycotoxin biosynthesis; aflatoxin biosynthesis. Its function is as follows. Cytochrome P450 monooxygenase; part of the gene cluster that mediates the biosynthesis of aflatoxins, a group of polyketide-derived furanocoumarins, and part of the most toxic and carcinogenic compounds among the known mycotoxins. The four major aflatoxins produced by A.parasiticus are aflatoxin B1 (AFB1), aflatoxin B2 (AFB2), aflatoxin G1 (AFG1) and aflatoxin G2 (AFG2). The role of the cytochrome P450 monooxygenase aflV in aflatoxin biosynthesis has still to be characterized. The biosynthesis of aflatoxins begins with the norsolorinic acid synthase aflC that combines a hexanoyl starter unit produced by the fatty acid synthase aflA/aflB and 7 malonyl-CoA extender units to synthesize the precursor NOR. The second step is the conversion of NOR to averantin and requires the norsolorinic acid ketoreductase aflD, which catalyzes the dehydration of norsolorinic acid to form (1'S)-averantin. The norsolorinic acid reductases aflE and aflF may also play a role in the conversion of NOR to AVN. The cytochrome P450 monooxygenase aflG then catalyzes the hydroxylation of AVN to 5'hydroxyaverantin (HAVN). The next step is performed by the 5'-hydroxyaverantin dehydrogenase aflH that transforms HAVN to 5'-oxoaverantin (OAVN) which is further converted to averufin (AVF) by aflK that plays a dual role in the pathway, as a 5'-oxoaverantin cyclase that mediates conversion of 5'-oxoaverantin, as well as a versicolorin B synthase in a later step in the pathway. The averufin oxidase aflI catalyzes the conversion of AVF to versiconal hemiacetal acetate (VHA). VHA is then the substrate for the versiconal hemiacetal acetate esterase aflJ to yield versiconal (VAL). Versicolorin B synthase aflK then converts VAL to versicolorin B (VERB) by closing the bisfuran ring of aflatoxin which is required for DNA-binding, thus giving to aflatoxin its activity as a mutagen. Then, the activity of the versicolorin B desaturase aflL leads to versicolorin A (VERA). A branch point starts from VERB since it can also be converted to dihydrodemethylsterigmatocystin (DMDHST), probably also by aflL, VERA being a precursor for aflatoxins B1 and G1, and DMDHST for aflatoxins B2 and G2. Next, the versicolorin reductase aflM and the cytochrome P450 monooxygenase aflN are involved in conversion of VERA to demethylsterigmatocystin (DMST). AflX and aflY seem also involved in this step, through probable aflX-mediated epoxide ring-opening step following versicolorin A oxidation and aflY-mediated Baeyer-Villiger oxidation required for the formation of the xanthone ring. The methyltransferase aflO then leads to the modification of DMST to sterigmatocystin (ST), and of DMDHST to dihydrosterigmatocystin (DHST). Both ST and DHST are then substrates of the O-methyltransferase aflP to yield O-methylsterigmatocystin (OMST) and dihydro-O-methylsterigmatocystin (DHOMST), respectively. Finally OMST is converted to aflatoxins B1 and G1, and DHOMST to aflatoxins B2 and G2, via the action of several enzymes including O-methylsterigmatocystin oxidoreductase aflQ, the cytochrome P450 monooxygenase aflU, but also the NADH-dependent flavin oxidoreductase nadA which is specifically required for the synthesis of AFG1. The polypeptide is Cytochrome P450 monooxygenase aflV (Aspergillus parasiticus (strain ATCC 56775 / NRRL 5862 / SRRC 143 / SU-1)).